The sequence spans 130 residues: Small ribosomal subunit protein uS8B (130 aa).

This sequence belongs to the universal ribosomal protein uS8 family.

This chain is Small ribosomal subunit protein uS8B (RpS15Ab), found in Drosophila melanogaster (Fruit fly).